We begin with the raw amino-acid sequence, 284 residues long: Steroidogenic acute regulatory protein, mitochondrial (284 aa).

Residues methionine 1–leucine 62 constitute a mitochondrion transit peptide. Residues serine 56 and serine 194 each carry the phosphoserine; by PKA modification. The START domain maps to leucine 66–alanine 279.

May interact with TSPO. Expressed within glia and neurons in discrete regions of the brain.

It is found in the mitochondrion. It catalyses the reaction cholesterol(in) = cholesterol(out). It participates in steroid metabolism; cholesterol metabolism. Functionally, plays a key role in steroid hormone synthesis by enhancing the metabolism of cholesterol into pregnenolone. Transporter that binds to and transport cholesterol through the intermembrane space of the mitochondrion. The protein is Steroidogenic acute regulatory protein, mitochondrial (Star) of Mus musculus (Mouse).